The following is a 199-amino-acid chain: Protein GrpE (199 aa).

The span at 1–24 shows a compositional bias: basic and acidic residues; that stretch reads MSKQNKKDWKKFKDEHKEEHKVEN. A disordered region spans residues 1 to 52; sequence MSKQNKKDWKKFKDEHKEEHKVENEILEEETDEESQHQEPALGHPSYTALEE.

The protein belongs to the GrpE family. Homodimer.

Its subcellular location is the cytoplasm. Functionally, participates actively in the response to hyperosmotic and heat shock by preventing the aggregation of stress-denatured proteins, in association with DnaK and GrpE. It is the nucleotide exchange factor for DnaK and may function as a thermosensor. Unfolded proteins bind initially to DnaJ; upon interaction with the DnaJ-bound protein, DnaK hydrolyzes its bound ATP, resulting in the formation of a stable complex. GrpE releases ADP from DnaK; ATP binding to DnaK triggers the release of the substrate protein, thus completing the reaction cycle. Several rounds of ATP-dependent interactions between DnaJ, DnaK and GrpE are required for fully efficient folding. The protein is Protein GrpE of Legionella pneumophila.